We begin with the raw amino-acid sequence, 267 residues long: Formamidopyrimidine-DNA glycosylase (267 aa).

Pro-2 (schiff-base intermediate with DNA) is an active-site residue. Catalysis depends on Glu-3, which acts as the Proton donor. Lys-58 functions as the Proton donor; for beta-elimination activity in the catalytic mechanism. DNA-binding residues include His-91, Arg-110, and Arg-152. The segment at Asp-233–Gln-267 adopts an FPG-type zinc-finger fold. The Proton donor; for delta-elimination activity role is filled by Arg-257.

This sequence belongs to the FPG family. As to quaternary structure, monomer. Requires Zn(2+) as cofactor.

The catalysed reaction is Hydrolysis of DNA containing ring-opened 7-methylguanine residues, releasing 2,6-diamino-4-hydroxy-5-(N-methyl)formamidopyrimidine.. The enzyme catalyses 2'-deoxyribonucleotide-(2'-deoxyribose 5'-phosphate)-2'-deoxyribonucleotide-DNA = a 3'-end 2'-deoxyribonucleotide-(2,3-dehydro-2,3-deoxyribose 5'-phosphate)-DNA + a 5'-end 5'-phospho-2'-deoxyribonucleoside-DNA + H(+). Involved in base excision repair of DNA damaged by oxidation or by mutagenic agents. Acts as a DNA glycosylase that recognizes and removes damaged bases. Has a preference for oxidized purines, such as 7,8-dihydro-8-oxoguanine (8-oxoG). Has AP (apurinic/apyrimidinic) lyase activity and introduces nicks in the DNA strand. Cleaves the DNA backbone by beta-delta elimination to generate a single-strand break at the site of the removed base with both 3'- and 5'-phosphates. The protein is Formamidopyrimidine-DNA glycosylase of Pelobacter propionicus (strain DSM 2379 / NBRC 103807 / OttBd1).